The primary structure comprises 426 residues: MSKSENLYSAARELIPGGVNSPVRAFTGVGGTPLFIEKADGAYLYDVDGKAYIDYVGSWGPMVLGHNHPAIRNAVIEAAERGLSFGAPTEMEVKMAQLVTELVPTMDMVRMVNSGTEATMSAIRLARGFTGRDKIIKFEGCYHGHADCLLVKAGSGALTLGQPNSPGVPADFAKHTLTCTYNDLASVRAAFEQYPQEIACIIVEPVAGNMNCVPPLPEFLPGLRALCDEFGALLIIDEVMTGFRVALAGAQDYFAVVPDLTCLGKIIGGGMPVGAFGGRRDVMDALAPTGPVYQAGTLSGNPIAMAAGFACLNEVAQPGIHETLDELTTRLAEGLLEAAEEAGIPLVVNHVGGMFGIFFTDAESVTCYQDVMACDVERFKRFFHMMLDEGVYLAPSAFEAGFMSVAHSMEDINNTIDAARRVFAKL.

Lys265 carries the post-translational modification N6-(pyridoxal phosphate)lysine.

Belongs to the class-III pyridoxal-phosphate-dependent aminotransferase family. HemL subfamily. In terms of assembly, homodimer. Pyridoxal 5'-phosphate is required as a cofactor.

Its subcellular location is the cytoplasm. The enzyme catalyses (S)-4-amino-5-oxopentanoate = 5-aminolevulinate. It functions in the pathway porphyrin-containing compound metabolism; protoporphyrin-IX biosynthesis; 5-aminolevulinate from L-glutamyl-tRNA(Glu): step 2/2. In Shigella flexneri serotype 5b (strain 8401), this protein is Glutamate-1-semialdehyde 2,1-aminomutase.